Consider the following 130-residue polypeptide: Small ribosomal subunit protein uS8 (130 aa).

It belongs to the universal ribosomal protein uS8 family. Part of the 30S ribosomal subunit. Contacts proteins S5 and S12.

Its function is as follows. One of the primary rRNA binding proteins, it binds directly to 16S rRNA central domain where it helps coordinate assembly of the platform of the 30S subunit. The chain is Small ribosomal subunit protein uS8 from Onion yellows phytoplasma (strain OY-M).